A 120-amino-acid chain; its full sequence is NAD(P)H-quinone oxidoreductase subunit 3, chloroplastic (120 aa).

3 helical membrane-spanning segments follow: residues 9 to 29 (IFWAFLLISSAIPVLAFLISG), 64 to 84 (MFALVFVVFDVETVFLYPWAM), and 88 to 108 (VLGVSAFIEAFIFVLILILGL).

This sequence belongs to the complex I subunit 3 family. NDH is composed of at least 16 different subunits, 5 of which are encoded in the nucleus.

Its subcellular location is the plastid. The protein localises to the chloroplast thylakoid membrane. It catalyses the reaction a plastoquinone + NADH + (n+1) H(+)(in) = a plastoquinol + NAD(+) + n H(+)(out). The catalysed reaction is a plastoquinone + NADPH + (n+1) H(+)(in) = a plastoquinol + NADP(+) + n H(+)(out). NDH shuttles electrons from NAD(P)H:plastoquinone, via FMN and iron-sulfur (Fe-S) centers, to quinones in the photosynthetic chain and possibly in a chloroplast respiratory chain. The immediate electron acceptor for the enzyme in this species is believed to be plastoquinone. Couples the redox reaction to proton translocation, and thus conserves the redox energy in a proton gradient. This is NAD(P)H-quinone oxidoreductase subunit 3, chloroplastic from Arabidopsis thaliana (Mouse-ear cress).